A 213-amino-acid polypeptide reads, in one-letter code: Thiopurine S-methyltransferase (213 aa).

4 residues coordinate S-adenosyl-L-methionine: Trp10, Leu45, Glu66, and Arg121.

Belongs to the class I-like SAM-binding methyltransferase superfamily. TPMT family.

Its subcellular location is the cytoplasm. It carries out the reaction S-adenosyl-L-methionine + a thiopurine = S-adenosyl-L-homocysteine + a thiopurine S-methylether.. The sequence is that of Thiopurine S-methyltransferase from Aliivibrio fischeri (strain ATCC 700601 / ES114) (Vibrio fischeri).